We begin with the raw amino-acid sequence, 213 residues long: Glutathione S-transferase APIC (213 aa).

The GST N-terminal domain occupies 1 to 82 (MAIKVHGSPM…YIAHVYADNG (82 aa)). Residues Ser-11, 12–13 (TA), 40–41 (HK), 53–54 (QV), and 66–67 (ES) each bind glutathione. The 125-residue stretch at 89-213 (DPKKMPIMSV…WVKGLEKLQK (125 aa)) folds into the GST C-terminal domain.

Belongs to the GST superfamily. Phi family.

The catalysed reaction is RX + glutathione = an S-substituted glutathione + a halide anion + H(+). Its function is as follows. Conjugation of reduced glutathione to a wide number of exogenous and endogenous hydrophobic electrophiles. This chain is Glutathione S-transferase APIC, found in Nicotiana tabacum (Common tobacco).